The following is a 222-amino-acid chain: MLWLLFFLVTAIHADLCRPDAENAFKVRLSIRTALGDKAYAWDANEEYLFKAMVAFSMRKVPNRETTEISHVLLCNVTQRVSFWFVVTDPSRNHTLPAVEVQSAIRMNRNRINNAFFLNDQTLEFLRIPSTLAPPTDPSVPIWIIIFGVIFCIVLVATMLLIISGIRQHRRKNKGPSEMEDSEDKCENVITIENGIPCDPLDMKGGHINDAFVTEDERLTPL.

The first 14 residues, 1–14, serve as a signal peptide directing secretion; sequence MLWLLFFLVTAIHA. Over 15–141 the chain is Extracellular; the sequence is DLCRPDAENA…LAPPTDPSVP (127 aa). The Collectrin-like domain occupies 21 to 222; sequence AENAFKVRLS…VTEDERLTPL (202 aa). N-linked (GlcNAc...) asparagine glycosylation is found at N76 and N93. Residues 142–162 form a helical membrane-spanning segment; sequence IWIIIFGVIFCIVLVATMLLI. Over 163-222 the chain is Cytoplasmic; it reads ISGIRQHRRKNKGPSEMEDSEDKCENVITIENGIPCDPLDMKGGHINDAFVTEDERLTPL. T214 and T220 each carry phosphothreonine.

It belongs to the CLTRN family. As to quaternary structure, monomer. Homodimer; dimerization prevents CLTRN cleavage by BACE2. Interacts with SLC6A18; this interaction regulates the trafficking of SLC6A18 to the cell membrane and its amino acid transporter activity. Interacts with SLC6A19; this interaction regulates the trafficking of SLC6A19 to the cell membrane and its amino acid transporter activity. Interacts with SNAPIN. In terms of processing, glycosylated. Glycosylation is required for plasma membrane localization and for its cleavage by BACE2. Post-translationally, proteolytically processed in pancreatic beta cells by BACE2 leading to the generation and extracellular release of soluble CLTRN, and a corresponding cell-associated C-terminal fragment which is later cleaved by gamma-secretase. This shedding process inactivates CLTRN. Three cleavage sites have been identified for BACE2, two clustered sites after Phe-116 and Leu-118 and a more membrane proximal site at Phe-125; the preferred BACE2 cleavage site seems to be between Phe-125 and Leu-126, Phe-116 and Leu-118 act as alternative sites.

The protein resides in the cell membrane. Functionally, plays an important role in amino acid transport by acting as binding partner of amino acid transporters SLC6A18 and SLC6A19, regulating their trafficking on the cell surface and their activity. May also play a role in trafficking of amino acid transporters SLC3A1 and SLC7A9 to the renal cortical cell membrane. Regulator of SNARE complex function. Stimulator of beta cell replication. The sequence is that of Collectrin (CLTRN) from Bos taurus (Bovine).